A 264-amino-acid polypeptide reads, in one-letter code: Transmembrane protein 41A (264 aa).

The signal sequence occupies residues 1 to 17 (MRALLGLLLVFGGCTFA). The next 5 helical transmembrane spans lie at 67–87 (AYVFLLFCSAYLYKQGFAIPG), 100–122 (GPWLGLLLCCVLTSVGATGCYLL), 153–173 (LFFFLLFLRLFPMTPNWFLNL), 175–195 (APILNIPIVQFFFSVLIGLIP), and 219–239 (WETVLKLLAIALVALVPGTLI). Residues 96-207 (GALFGPWLGL…FICVQTGSIL (112 aa)) are VTT domain.

It belongs to the TMEM41 family.

The protein resides in the membrane. This Mus musculus (Mouse) protein is Transmembrane protein 41A (Tmem41a).